The chain runs to 1220 residues: DNA-directed RNA polymerase subunit beta' (1220 aa).

Zn(2+)-binding residues include C60, C62, C75, and C78. Residues D449, D451, and D453 each coordinate Mg(2+). 4 residues coordinate Zn(2+): C818, C892, C899, and C902.

The protein belongs to the RNA polymerase beta' chain family. The RNAP catalytic core consists of 2 alpha, 1 beta, 1 beta' and 1 omega subunit. When a sigma factor is associated with the core the holoenzyme is formed, which can initiate transcription. Mg(2+) serves as cofactor. Requires Zn(2+) as cofactor.

It carries out the reaction RNA(n) + a ribonucleoside 5'-triphosphate = RNA(n+1) + diphosphate. Its function is as follows. DNA-dependent RNA polymerase catalyzes the transcription of DNA into RNA using the four ribonucleoside triphosphates as substrates. In Lacticaseibacillus casei (strain BL23) (Lactobacillus casei), this protein is DNA-directed RNA polymerase subunit beta'.